Consider the following 773-residue polypeptide: Carnitine O-palmitoyltransferase 1, liver isoform (773 aa).

The residue at position 2 (A2) is an N-acetylalanine. Residues 2 to 47 lie on the Cytoplasmic side of the membrane; the sequence is AEAHQAVAFQFTVTPDGIDLRLSHEALRQIYLSGLHSWKKKFIRFK. Residues 48–73 traverse the membrane as a helical segment; that stretch reads NGIITGVYPASPSSWLIVVVGVMTTM. At 74–102 the chain is on the mitochondrial intermembrane side; sequence YAKIDPSLGIIAKINRTLETANCMSSQTK. Residues 103-122 traverse the membrane as a helical segment; it reads NVVSGVLFGTGLWVALIVTM. At 123–773 the chain is on the cytoplasmic side; the sequence is RYSLKVLLSY…LFGLSSNSKK (651 aa). Y282 carries the 3'-nitrotyrosine modification. H473 functions as the Proton acceptor in the catalytic mechanism. 555–567 lines the CoA pocket; sequence GKGIIKKCRTSPD. T588 is subject to Phosphothreonine. Y589 carries the 3'-nitrotyrosine modification. Positions 589 and 602 each coordinate (R)-carnitine. Phosphothreonine is present on T604. A phosphoserine mark is found at S741 and S747.

It belongs to the carnitine/choline acetyltransferase family. In terms of assembly, homohexamer and homotrimer. Identified in a complex that contains at least CPT1A, ACSL1 and VDAC1. Also identified in complexes with ACSL1 and VDAC2 and VDAC3. Interacts with ZDHHC4. As to expression, strong expression in kidney and heart, and lower in liver and skeletal muscle.

The protein resides in the mitochondrion outer membrane. It catalyses the reaction (R)-carnitine + hexadecanoyl-CoA = O-hexadecanoyl-(R)-carnitine + CoA. The catalysed reaction is succinyl-CoA + L-lysyl-[protein] = N(6)-succinyl-L-lysyl-[protein] + CoA + H(+). It participates in lipid metabolism; fatty acid beta-oxidation. Its activity is regulated as follows. Inhibited by malonyl-CoA. Functionally, catalyzes the transfer of the acyl group of long-chain fatty acid-CoA conjugates onto carnitine, an essential step for the mitochondrial uptake of long-chain fatty acids and their subsequent beta-oxidation in the mitochondrion. Also possesses a lysine succinyltransferase activity that can regulate enzymatic activity of substrate proteins such as ENO1 and metabolism independent of its classical carnitine O-palmitoyltransferase activity. Plays an important role in hepatic triglyceride metabolism. Also plays a role in inducible regulatory T-cell (iTreg) differentiation once activated by butyryl-CoA that antagonizes malonyl-CoA-mediated CPT1A repression. Sustains the IFN-I response by recruiting ZDHCC4 to palmitoylate MAVS at the mitochondria leading to MAVS stabilization and activation. Promotes ROS-induced oxidative stress in liver injury via modulation of NFE2L2 and NLRP3-mediated signaling pathways. The polypeptide is Carnitine O-palmitoyltransferase 1, liver isoform (Homo sapiens (Human)).